A 547-amino-acid chain; its full sequence is CTP synthase (547 aa).

The segment at 1–265 is amidoligase domain; it reads MARYVFITGG…DQAVLDAFGI (265 aa). Ser13 provides a ligand contact to CTP. Ser13 provides a ligand contact to UTP. ATP is bound by residues 14-19 and Asp71; that span reads SLGKGL. Mg(2+)-binding residues include Asp71 and Glu139. CTP-binding positions include 146–148, 186–191, and Lys222; these read DIE and KTKPTQ. UTP is bound by residues 186–191 and Lys222; that span reads KTKPTQ. The region spanning 291-546 is the Glutamine amidotransferase type-1 domain; sequence RVAIVGKYTQ…IRAAVEVSRL (256 aa). L-glutamine is bound at residue Gly353. Residue Cys380 is the Nucleophile; for glutamine hydrolysis of the active site. L-glutamine is bound by residues 381-384, Glu404, and Arg474; that span reads LGMQ. Catalysis depends on residues His519 and Glu521.

The protein belongs to the CTP synthase family. In terms of assembly, homotetramer.

It catalyses the reaction UTP + L-glutamine + ATP + H2O = CTP + L-glutamate + ADP + phosphate + 2 H(+). It carries out the reaction L-glutamine + H2O = L-glutamate + NH4(+). The enzyme catalyses UTP + NH4(+) + ATP = CTP + ADP + phosphate + 2 H(+). The protein operates within pyrimidine metabolism; CTP biosynthesis via de novo pathway; CTP from UDP: step 2/2. With respect to regulation, allosterically activated by GTP, when glutamine is the substrate; GTP has no effect on the reaction when ammonia is the substrate. The allosteric effector GTP functions by stabilizing the protein conformation that binds the tetrahedral intermediate(s) formed during glutamine hydrolysis. Inhibited by the product CTP, via allosteric rather than competitive inhibition. Its function is as follows. Catalyzes the ATP-dependent amination of UTP to CTP with either L-glutamine or ammonia as the source of nitrogen. Regulates intracellular CTP levels through interactions with the four ribonucleotide triphosphates. This is CTP synthase from Cereibacter sphaeroides (strain ATCC 17025 / ATH 2.4.3) (Rhodobacter sphaeroides).